We begin with the raw amino-acid sequence, 262 residues long: MARGLKKHLKRLNAPKHWMLDKLGGAFAPKPSSGPHKSRECLPLVLIIRNRLKYALTYREVISILMQRHIQVDGKVRTDKTYPAGFMDVVSIPKTNENFRLLYDTKGRFRLHSIKDEEAKFKLCKVRSIQFGQKGIPYLNTYDGRTIRYPDPLIKPNDTIKLDLEENKIVEFIKFDVGNVVMVTGGRNRGRVGVIKNREKHKGSFETIHIQDSTGHEFATRLGNVYTIGKGTKPWVSLPKGKGIKLTIIEEARKRLASQQAA.

The S4 RNA-binding domain occupies 42–104; that stretch reads LPLVLIIRNR…TNENFRLLYD (63 aa).

Belongs to the eukaryotic ribosomal protein eS4 family.

Its subcellular location is the cytoplasm. This Arabidopsis thaliana (Mouse-ear cress) protein is Small ribosomal subunit protein eS4y (RPS4B).